The chain runs to 511 residues: GMP synthase [glutamine-hydrolyzing] (511 aa).

One can recognise a Glutamine amidotransferase type-1 domain in the interval 5–195; sequence PIVVLDFGSQ…AKHICGCEST (191 aa). The active-site Nucleophile is Cys82. Residues His169 and Glu171 contribute to the active site. The GMPS ATP-PPase domain maps to 196–386; sequence WNMGSFAKEQ…LGLPKSMISR (191 aa). ATP is bound at residue 223-229; that stretch reads SGGVDSS.

As to quaternary structure, homodimer.

It carries out the reaction XMP + L-glutamine + ATP + H2O = GMP + L-glutamate + AMP + diphosphate + 2 H(+). The protein operates within purine metabolism; GMP biosynthesis; GMP from XMP (L-Gln route): step 1/1. Functionally, catalyzes the synthesis of GMP from XMP. The sequence is that of GMP synthase [glutamine-hydrolyzing] from Aliarcobacter butzleri (strain RM4018) (Arcobacter butzleri).